The chain runs to 316 residues: Protoheme IX farnesyltransferase (316 aa).

Transmembrane regions (helical) follow at residues 32 to 52, 53 to 73, 93 to 113, 116 to 136, 152 to 172, 180 to 200, 226 to 246, 248 to 268, and 289 to 309; these read VMSL…GQIN, PVLG…SGAL, IPAG…LSCF, AILG…TIFF, NIVI…ACVT, TVLF…LALF, IVAY…LGFA, FAYG…SIAV, and IFYL…AMLV.

This sequence belongs to the UbiA prenyltransferase family. Protoheme IX farnesyltransferase subfamily.

It is found in the cell inner membrane. It carries out the reaction heme b + (2E,6E)-farnesyl diphosphate + H2O = Fe(II)-heme o + diphosphate. It functions in the pathway porphyrin-containing compound metabolism; heme O biosynthesis; heme O from protoheme: step 1/1. In terms of biological role, converts heme B (protoheme IX) to heme O by substitution of the vinyl group on carbon 2 of heme B porphyrin ring with a hydroxyethyl farnesyl side group. The chain is Protoheme IX farnesyltransferase from Rhizobium etli (strain CIAT 652).